Consider the following 173-residue polypeptide: MSLSKMSMSGMSGMGMGSSSNSSAATCRMSMLWNWYIHDSCFLAKSWHINTGNKFAGSIIGIFFFAVAIEGLSLVQRMFDRWIVAHSNGKTLSGPLRIFFPSSTVHVTVWQQLIRAAMYSSFYLSATILMLIVMSFNGYAILFGFVGAWIGFFLFASDTYGTPSTGTGCCESR.

Over 1-54 (MSLSKMSMSGMSGMGMGSSSNSSAATCRMSMLWNWYIHDSCFLAKSWHINTGNK) the chain is Extracellular. A helical membrane pass occupies residues 55–75 (FAGSIIGIFFFAVAIEGLSLV). Residues 76–135 (QRMFDRWIVAHSNGKTLSGPLRIFFPSSTVHVTVWQQLIRAAMYSSFYLSATILMLIVMS) lie on the Cytoplasmic side of the membrane. Residues 136 to 156 (FNGYAILFGFVGAWIGFFLFA) traverse the membrane as a helical segment. Over 157–173 (SDTYGTPSTGTGCCESR) the chain is Extracellular.

The protein belongs to the copper transporter (Ctr) (TC 1.A.56) family. SLC31A subfamily. Interacts with ctr4.

It is found in the membrane. Its function is as follows. Required for high affinity copper (probably reduced Cu I) transport into the cell. The sequence is that of Copper transport protein ctr5 (ctr5) from Schizosaccharomyces pombe (strain 972 / ATCC 24843) (Fission yeast).